Consider the following 246-residue polypeptide: MSKAPTSTNRTGRKIGQKVKKTKLKASSRRWLERHINDPYVQRAKLEGYRARAAFKLLEINDKHQILKGATRIIDLGAAPGSWSQIASKVTDSTEDDIRVAAIDFLEIDPIPGVKILQLDFLDPTAPDQLMEAVGGTPDLVLSDMAAPTTGHQKTDHIRTMHLCEVAADFAVQVLAEGGHFLAKTFQGGTEKALLDMLKKNFKQVLHIKPASSRSESVEMFLLAKHFKGRRHEPAIDADAEESTED.

S-adenosyl-L-methionine-binding residues include Gly81, Trp83, Asp104, Asp120, and Asp144. The active-site Proton acceptor is Lys184.

The protein belongs to the class I-like SAM-binding methyltransferase superfamily. RNA methyltransferase RlmE family.

Its subcellular location is the cytoplasm. It catalyses the reaction uridine(2552) in 23S rRNA + S-adenosyl-L-methionine = 2'-O-methyluridine(2552) in 23S rRNA + S-adenosyl-L-homocysteine + H(+). Specifically methylates the uridine in position 2552 of 23S rRNA at the 2'-O position of the ribose in the fully assembled 50S ribosomal subunit. The chain is Ribosomal RNA large subunit methyltransferase E from Agrobacterium fabrum (strain C58 / ATCC 33970) (Agrobacterium tumefaciens (strain C58)).